Here is a 172-residue protein sequence, read N- to C-terminus: Translation initiation factor IF-3 (172 aa).

The protein belongs to the IF-3 family. Monomer.

The protein localises to the cytoplasm. In terms of biological role, IF-3 binds to the 30S ribosomal subunit and shifts the equilibrium between 70S ribosomes and their 50S and 30S subunits in favor of the free subunits, thus enhancing the availability of 30S subunits on which protein synthesis initiation begins. This is Translation initiation factor IF-3 from Bartonella tribocorum (strain CIP 105476 / IBS 506).